The primary structure comprises 296 residues: tRNA (guanine-N(7)-)-methyltransferase (296 aa).

Positions 1–26 are disordered; it reads MSKRTREESEMEAGPSTASPGVSVSP. Residues G101, 124–125, 168–169, and L188 contribute to the S-adenosyl-L-methionine site; these read EI and NS. D191 is a catalytic residue. 266–268 provides a ligand contact to S-adenosyl-L-methionine; the sequence is TEE.

It belongs to the class I-like SAM-binding methyltransferase superfamily. TrmB family. Forms a complex with TRM82.

The protein resides in the nucleus. The enzyme catalyses guanosine(46) in tRNA + S-adenosyl-L-methionine = N(7)-methylguanosine(46) in tRNA + S-adenosyl-L-homocysteine. It participates in tRNA modification; N(7)-methylguanine-tRNA biosynthesis. Functionally, catalyzes the formation of N(7)-methylguanine at position 46 (m7G46) in tRNA. This is tRNA (guanine-N(7)-)-methyltransferase from Cryptococcus neoformans var. neoformans serotype D (strain JEC21 / ATCC MYA-565) (Filobasidiella neoformans).